Reading from the N-terminus, the 985-residue chain is P3N-PIPO polyprotein (985 aa).

Residues 144 to 287 enclose the Peptidase S30 domain; sequence TFRDGHMNKF…MATVTHMEQY (144 aa). Catalysis depends on for P1 proteinase activity residues His195, Asp204, and Ser238. The Involved in interaction with stylet and aphid transmission signature appears at 337–340; that stretch reads KLTC. The Involved in virions binding and aphid transmission signature appears at 595 to 597; it reads PTK. The Peptidase C6 domain maps to 621–743; that stretch reads LYIALDGYCY…ESEIKHYRVG (123 aa). Residues Cys629 and His702 each act as for helper component proteinase activity in the active site.

Belongs to the potyviridae P3N-PIPO polyprotein family. In terms of assembly, interacts (via PIPO domain) with host PCaP1 protein; this interaction may help to anchor the movement complex to the plasma membrane from which the complex could move to the plasmodesmata. Potyviral RNA is expressed as two polyproteins which undergo post-translational proteolytic processing. Genome polyprotein is processed by NIa-pro, P1 and HC-pro proteinases resulting in the production of at least ten individual proteins. P3N-PIPO is cleaved by P1 and HC-pro proteinases resulting in the production of three individual proteins. The P1 proteinase and the HC-pro cleave only their respective C-termini autocatalytically.

It is found in the host cell junction. Its subcellular location is the host plasmodesma. The enzyme catalyses Hydrolyzes a Gly-|-Gly bond at its own C-terminus, commonly in the sequence -Tyr-Xaa-Val-Gly-|-Gly, in the processing of the potyviral polyprotein.. Functionally, required for aphid transmission and also has proteolytic activity. Only cleaves a Gly-Gly dipeptide at its own C-terminus. Interacts with virions and aphid stylets. Acts as a suppressor of RNA-mediated gene silencing, also known as post-transcriptional gene silencing (PTGS), a mechanism of plant viral defense that limits the accumulation of viral RNAs. May have RNA-binding activity. In terms of biological role, allows efficient cell to cell propagation, by bypassing the host cell wall barrier. Transports viral genome to neighboring plant cells directly through plasmosdesmata, without any budding. The chain is P3N-PIPO polyprotein from Pepper mottle virus (isolate California) (PeMV).